The chain runs to 244 residues: Zinc import ATP-binding protein ZnuC 2 (244 aa).

Positions 3 to 218 (IGCASLTIQL…PEYLALFGID (216 aa)) constitute an ABC transporter domain. 35–42 (GPNGSGKT) is an ATP binding site.

The protein belongs to the ABC transporter superfamily. Zinc importer (TC 3.A.1.15.5) family. In terms of assembly, the complex is composed of two ATP-binding proteins (ZnuC), two transmembrane proteins (ZnuB) and a solute-binding protein (ZnuA).

It is found in the cell inner membrane. The enzyme catalyses Zn(2+)(out) + ATP(in) + H2O(in) = Zn(2+)(in) + ADP(in) + phosphate(in) + H(+)(in). Part of the ABC transporter complex ZnuABC involved in zinc import. Responsible for energy coupling to the transport system. In Hahella chejuensis (strain KCTC 2396), this protein is Zinc import ATP-binding protein ZnuC 2.